Here is a 508-residue protein sequence, read N- to C-terminus: Cell death protein 3 (508 aa).

The propeptide occupies 1–223 (MMRQDRRNLL…FHEEDMNYVD (223 aa)). Residues 2–91 (MRQDRRNLLE…HELAAVLEPL (90 aa)) enclose the CARD domain. Disordered stretches follow at residues 106–130 (PMSP…TRVH) and 148–184 (YTRA…SSAN). Residues 118–127 (LSPSTFSSPT) show a composition bias toward polar residues. The segment covering 171 to 184 (SPSNSFQSQPSSAN) has biased composition (low complexity). Catalysis depends on residues H317 and C360. Residues 392–407 (GPLFNFLGCVRPQAQQ) form a required for interaction with ced-4 region.

This sequence belongs to the peptidase C14A family. In terms of assembly, the active form is probably a heterodimer of the p17 subunit with either the p15 or p13 subunit which are all derived from the precursor by autocatalysis. Interacts with octameric ced-4 (two ced-3 zymogens per one ced-4 octamer); the interaction causes the autoproteolytic cleavage and activation of ced-3. Processed ced-3 also interacts with ced-4 octamer to form a stable holoenzyme. Interacts (via large subunit p17) with csp-3; the interaction prevents ced-3 autoactivation and delays ced-4-induced ced-3 processing. Interacts (via large subunit p17 or small subunit p13 or p15) with csp-2; the interaction inhibits ced-3 autoactivation. Interacts (via propeptide) with nucleoporin npp-14; the interaction tethers ced-3 to the nuclear membrane and prevents its autoprocessing in absence of ced-4. Interacts with dct-1. May form a complex composed of ced-3, ced-4 and mac-1. In terms of processing, autocatalytic cleavage removes the propeptide and generates the catalytic subunit p17 and two non-catalytic subunits p15 and p13; autoproteolysis is induced by ced-4 oligomer. Cleaved by caspase csp-1 probably at Asp-146 and Asp-376.

It is found in the nucleus membrane. Its subcellular location is the perikaryon. It localises to the synapse. The protein resides in the mitochondrion. The protein localises to the cytoplasm. It is found in the perinuclear region. It catalyses the reaction Strict requirement for an Asp residue at position P1 and has a preferred cleavage sequence of Asp-Glu-Val-Asp-|-.. Octameric ced-4 activates zymogen autoprocessing and enhances activity of processed ced-3. Zymogen autoactivation is inhibited by csp-3. csp-3 has no effect on active ced-3. Zymogen autoactivation is inhibited by csp-2. Inhibited by cysteine protease inhibitor iodoacetic acid (CH3COOI). Inhibited by benzyloxycarbonyl-DEVD-fluoro-methyl ketone (zDEVD-fmk). Inhibited by benzyloxycarbonyl-VAD-fluoro-methyl ketone (zVAD-fmk). Not inhibited by N-[N-(L-3-transcarboxirane-2-carbonyl)-leucyl]-agmatine (E-64) or by the serine and cysteine protease inhibitor L-1-chloro-3-[4-to-osylamido]-7-amino-2-heptanone (TLCK). Functionally, acts as a cysteine protease in controlling programmed cell death (apoptosis) by proteolytically activating or inactivating a wide range of substrates. Component of the egl-1, ced-9, ced-4 and ced-3 apoptotic signaling cascade required for the initiation of programmed cell death in cells fated to die during embryonic and postembryonic development. During oogenesis, required for germline apoptosis downstream of ced-9 and ced-4 but independently of egl-1. By cleaving and activating ced-8, promotes phosphatidylserine exposure on the surface of apoptotic cells; phosphatidylserine is a specific marker only present at the surface of apoptotic cells and acts as a specific signal for engulfment. By cleaving and converting dcr-1 into a deoxyribonuclease (DNase), promotes apoptotic chromosomal DNA fragmentation. By cleaving mitochondrial fission protein drp-1, may regulate the removal of mitochondria during apoptosis. During germline apoptosis, cleaves translation initiation factor ifg-1 (isoform p170) promoting cap-independent translation. During male tail morphogenesis, promotes apoptosis of the tail-spike cell downstream of ced-4 but independently of egl-1 and ced-9. By cleaving cnt-1, prevents the activation of the prosurvival akt-1/2 signaling pathway and thus promotes apoptosis. Downstream of ced-4, may play a role in sex-specific cell apoptosis by cleaving sex-determining protein fem-1. May regulate germline apoptosis in response to DNA damage, probably downstream of let-60/ras and mpk-1 pathway. Cleaves ced-9 in vitro. Cleaves csp-2 isoform b resulting in the removal of the propeptide and the generation of csp-2 subunit p31 in vitro. Independently of its apoptotic role has additional functions. Probably by cleaving and thereby activating actin-severing protein gsnl-1, required for the elimination of transient presynaptic components during larval development downstream of egl-1, ced-9 and ced-4 pathway. Together with ain-1, a component of the miRNA-induced-silencing complex (miRISC), regulates temporal cell fate patterning during larval development. Acts in cell fate patterning by cleaving heterochronic protein lin-28, likely promoting its degradation. Also cleaves heterochronic protein lin-14 and exonuclease disl-2 in vitro. Downstream of calreticulin crt-1 and ced-4 and independently of egl-1 and ced-9, plays a role in the initial steps of axonal regrowth following axotomy. Cleaves 14-3-3-like protein ftt-2, tubulin tbb-2 and calreticulin crt-1 in vitro. Plays also a role in resistance to S.typhimurium-mediated infection. This chain is Cell death protein 3, found in Caenorhabditis remanei (Caenorhabditis vulgaris).